Here is a 378-residue protein sequence, read N- to C-terminus: 8-demethyl-8-alpha-L-rhamnosyl tetracenomycin-C 2'-O-methyltransferase (378 aa).

S-adenosyl-L-methionine contacts are provided by residues 195–201, Ser210, Asp227, 245–246, and Asp268; these read EIGVGGY and DQ. Asp268 contributes to the Mg(2+) binding site. His271 acts as the Proton acceptor in catalysis. Residues Glu296 and Asp297 each contribute to the Mg(2+) site.

Belongs to the methyltransferase OleY/MycE family. Mg(2+) is required as a cofactor.

The catalysed reaction is 8-demethyl-8-alpha-L-rhamnosyl-tetracenomycin C + S-adenosyl-L-methionine = 8-demethyl-8-(2-O-methyl-alpha-L-rhamnosyl)-tetracenomycin C + S-adenosyl-L-homocysteine + H(+). It participates in antibiotic biosynthesis. In terms of biological role, O-methyltransferase involved in the biosynthesis of the permethylated L-rhamnose moiety of elloramycin, an antitumor polyketide. Mediates the methylation of the hydroxy groups at the 2'-position after the sugar moiety has been attached to the aglycon. This Streptomyces olivaceus protein is 8-demethyl-8-alpha-L-rhamnosyl tetracenomycin-C 2'-O-methyltransferase.